The sequence spans 398 residues: NADH-quinone oxidoreductase subunit D (398 aa).

Belongs to the complex I 49 kDa subunit family. In terms of assembly, NDH-1 is composed of 14 different subunits. Subunits NuoB, C, D, E, F, and G constitute the peripheral sector of the complex.

The protein localises to the cell inner membrane. The catalysed reaction is a quinone + NADH + 5 H(+)(in) = a quinol + NAD(+) + 4 H(+)(out). Its function is as follows. NDH-1 shuttles electrons from NADH, via FMN and iron-sulfur (Fe-S) centers, to quinones in the respiratory chain. The immediate electron acceptor for the enzyme in this species is believed to be ubiquinone. Couples the redox reaction to proton translocation (for every two electrons transferred, four hydrogen ions are translocated across the cytoplasmic membrane), and thus conserves the redox energy in a proton gradient. This is NADH-quinone oxidoreductase subunit D from Bradyrhizobium diazoefficiens (strain JCM 10833 / BCRC 13528 / IAM 13628 / NBRC 14792 / USDA 110).